Consider the following 205-residue polypeptide: Regulator of G-protein signaling 4 (205 aa).

Residues Cys-2, Cys-12, and Cys-95 are each lipidated (S-palmitoyl cysteine). In terms of domain architecture, RGS spans 62–178 (SLENLISHEC…LKSRFYLDLV (117 aa)).

In terms of processing, palmitoylated on Cys-2 and/or Cys-12. Post-translationally, phosphorylated by cyclic GMP-dependent protein kinase. As to expression, expressed in brain and heart. Expressed in brain at protein level. Expressed in prefontal and visual cortex. Isoform 4 and isoform 5 are expressed ubiquitously. Isoform 1, isoform 2 and isoform 3 are not expressed in the cerebellum.

In terms of biological role, inhibits signal transduction by increasing the GTPase activity of G protein alpha subunits thereby driving them into their inactive GDP-bound form. Activity on G(z)-alpha is inhibited by phosphorylation of the G-protein. Activity on G(z)-alpha and G(i)-alpha-1 is inhibited by palmitoylation of the G-protein. The sequence is that of Regulator of G-protein signaling 4 (RGS4) from Homo sapiens (Human).